A 164-amino-acid polypeptide reads, in one-letter code: Transcription elongation factor GreA (164 aa).

Positions 50-76 (YHAAREEQGQQEARIRQLQELLNNAKV) form a coiled coil.

This sequence belongs to the GreA/GreB family.

In terms of biological role, necessary for efficient RNA polymerase transcription elongation past template-encoded arresting sites. The arresting sites in DNA have the property of trapping a certain fraction of elongating RNA polymerases that pass through, resulting in locked ternary complexes. Cleavage of the nascent transcript by cleavage factors such as GreA or GreB allows the resumption of elongation from the new 3'terminus. GreA releases sequences of 2 to 3 nucleotides. The polypeptide is Transcription elongation factor GreA (Mycolicibacterium smegmatis (strain ATCC 700084 / mc(2)155) (Mycobacterium smegmatis)).